Here is a 407-residue protein sequence, read N- to C-terminus: Putative polysaccharide ligase RF_0568 (407 aa).

10 helical membrane passes run 15–35 (LGMV…LMLF), 71–91 (MTIK…LFAI), 100–120 (FIQV…VPFG), 129–149 (LILG…SHGF), 166–186 (GCAL…SSGK), 203–223 (ISDS…FILA), 229–249 (IFFK…PVIA), 272–292 (LFIW…GYGF), 324–344 (ILQI…CLVY), and 379–399 (IWQI…KLLV).

It belongs to the O-antigen ligase family.

The protein resides in the membrane. In Rickettsia felis (strain ATCC VR-1525 / URRWXCal2) (Rickettsia azadi), this protein is Putative polysaccharide ligase RF_0568.